A 74-amino-acid chain; its full sequence is Sec-independent protein translocase protein TatA (74 aa).

Residues 1–21 (MGGISIWNLVIIVLLVVLLFG) traverse the membrane as a helical segment. The tract at residues 51–74 (AEFEKVEQKTAESTEQKAKEKEQA) is disordered.

The protein belongs to the TatA/E family. In terms of assembly, the Tat system comprises two distinct complexes: a TatABC complex, containing multiple copies of TatA, TatB and TatC subunits, and a separate TatA complex, containing only TatA subunits. Substrates initially bind to the TatABC complex, which probably triggers association of the separate TatA complex to form the active translocon.

Its subcellular location is the cell inner membrane. In terms of biological role, part of the twin-arginine translocation (Tat) system that transports large folded proteins containing a characteristic twin-arginine motif in their signal peptide across membranes. TatA could form the protein-conducting channel of the Tat system. The polypeptide is Sec-independent protein translocase protein TatA (Glaesserella parasuis serovar 5 (strain SH0165) (Haemophilus parasuis)).